Consider the following 336-residue polypeptide: NAC domain-containing protein 100 (336 aa).

An NAC domain is found at 16–166 (LPPGFRFHPT…EWVICRVFQK (151 aa)). A DNA-binding region spans residues 113–172 (VGMKKTLVFYRGRAPKGQKTNWVMHEYRLEGKFSAHNLPKTAKNEWVICRVFQKSAGGKK). The interval 313 to 336 (RRFDSQEDPSSSTGPVDLEPFWNY) is disordered.

Its subcellular location is the nucleus. In terms of biological role, binds to the promoter regions of genes involved in chlorophyll catabolic processes, such as NYC1, SGR1, SGR2 and PAO. The polypeptide is NAC domain-containing protein 100 (Arabidopsis thaliana (Mouse-ear cress)).